The following is a 241-amino-acid chain: MEGWQRAFVLHGRPYSETSLMLDLFTEGEGRMRVLAKGARGRRSNLKGCLQPFTPLLVRWTGRGEVKTLRSAEPVSLALPLTGSMLYSGLYVNELLSRVLEHQTNYSALFFDYLHCLQSLAGSDGSPEYALRQFELAILAHLGYGVDFLHCAGSGQPVSDTMTYRYREEKGFIASLVVDHYSFTGRQLLALANREFPDADTLRAAKRFTRIALKPYLGGKPLKSRELFRQFVIKPPSEPLP.

The protein belongs to the RecO family.

In terms of biological role, involved in DNA repair and RecF pathway recombination. This is DNA repair protein RecO from Yersinia enterocolitica serotype O:8 / biotype 1B (strain NCTC 13174 / 8081).